Reading from the N-terminus, the 266-residue chain is Glucosamine-6-phosphate deaminase (266 aa).

Residue D72 is the Proton acceptor; for enolization step of the active site. The active-site For ring-opening step is D141. The Proton acceptor; for ring-opening step role is filled by H143. E148 serves as the catalytic For ring-opening step.

The protein belongs to the glucosamine/galactosamine-6-phosphate isomerase family. NagB subfamily. As to quaternary structure, homohexamer.

It carries out the reaction alpha-D-glucosamine 6-phosphate + H2O = beta-D-fructose 6-phosphate + NH4(+). It functions in the pathway amino-sugar metabolism; N-acetylneuraminate degradation; D-fructose 6-phosphate from N-acetylneuraminate: step 5/5. Allosterically activated by N-acetylglucosamine 6-phosphate (GlcNAc6P). Catalyzes the reversible isomerization-deamination of glucosamine 6-phosphate (GlcN6P) to form fructose 6-phosphate (Fru6P) and ammonium ion. This is Glucosamine-6-phosphate deaminase from Aliivibrio salmonicida (strain LFI1238) (Vibrio salmonicida (strain LFI1238)).